An 838-amino-acid polypeptide reads, in one-letter code: Valine--tRNA ligase (838 aa).

Residues 46 to 56 (PNLTGTLHIGH) carry the 'HIGH' region motif. Residues 514–518 (KMSKS) carry the 'KMSKS' region motif. Lys-517 serves as a coordination point for ATP. Residues 768 to 838 (VDNAANNLAH…HLIAKLTKAE (71 aa)) adopt a coiled-coil conformation.

It belongs to the class-I aminoacyl-tRNA synthetase family. ValS type 1 subfamily. Monomer.

Its subcellular location is the cytoplasm. The catalysed reaction is tRNA(Val) + L-valine + ATP = L-valyl-tRNA(Val) + AMP + diphosphate. Catalyzes the attachment of valine to tRNA(Val). As ValRS can inadvertently accommodate and process structurally similar amino acids such as threonine, to avoid such errors, it has a 'posttransfer' editing activity that hydrolyzes mischarged Thr-tRNA(Val) in a tRNA-dependent manner. The polypeptide is Valine--tRNA ligase (Mycoplasma pneumoniae (strain ATCC 29342 / M129 / Subtype 1) (Mycoplasmoides pneumoniae)).